We begin with the raw amino-acid sequence, 72 residues long: MAKEDNIEMQGTILETLPNTMFRVELENGHVVIAHISGKMRKNYIRILTGDKVTVQLTPYDLSKGRIVFRAR.

Positions 1–72 (MAKEDNIEMQ…SKGRIVFRAR (72 aa)) constitute an S1-like domain.

This sequence belongs to the IF-1 family. In terms of assembly, component of the 30S ribosomal translation pre-initiation complex which assembles on the 30S ribosome in the order IF-2 and IF-3, IF-1 and N-formylmethionyl-tRNA(fMet); mRNA recruitment can occur at any time during PIC assembly.

It localises to the cytoplasm. Functionally, one of the essential components for the initiation of protein synthesis. Stabilizes the binding of IF-2 and IF-3 on the 30S subunit to which N-formylmethionyl-tRNA(fMet) subsequently binds. Helps modulate mRNA selection, yielding the 30S pre-initiation complex (PIC). Upon addition of the 50S ribosomal subunit IF-1, IF-2 and IF-3 are released leaving the mature 70S translation initiation complex. The polypeptide is Translation initiation factor IF-1 (Shewanella frigidimarina (strain NCIMB 400)).